The sequence spans 461 residues: MRVLIKNGTVVNADGQAKQDLLIESGIVRQLGNNISPQLPYEEIDATGCYVFPGGVDVHTHFNIDVGIARSCDDFFTGTRAAACGGTTTIIDHMGFGPNGCRLRHQLEVYRGYAAHKAVIDYSFHGVIQHINHAILDEIPMIVEEGLSSFKLYLTYQYKLNDDEVLQALRRLHESGALTTVHPENDAAIASKRAEFIAAGLTAPRYHALSRPLECEAEAIARMINLAQIAGNAPLYIVHLSNGLGLDYLRLARANHQPVWVETCPQYLLLDERSYDTEDGMKFILSPPLRNVREQDKLWCGISDGAIDVVATDHCTFSMAQRLQISKGDFSRCPNGLPGVENRMQLLFSSGVMTGRITPERFVELTSAMPARLFGLWPQKGLLAPGSDGDVVIIDPRQSQQIQHRHLHDNADYSPWEGFTCQGAIVRTLSRGETIFCDGTFTGKAGRGRFLRRKPFVPPVL.

A divalent metal cation is bound by residues His59, His61, and Lys151. At Lys151 the chain carries N6-carboxylysine. Tyr156 provides a ligand contact to substrate. A divalent metal cation is bound by residues His182 and His239. Ser286 contacts substrate. Asp313 is an a divalent metal cation binding site. Asn335 provides a ligand contact to substrate.

The protein belongs to the metallo-dependent hydrolases superfamily. Hydantoinase/dihydropyrimidinase family. In terms of assembly, homotetramer. Zn(2+) serves as cofactor. It depends on Ni(2+) as a cofactor. The cofactor is Co(2+). Requires Mn(2+) as cofactor. Post-translationally, carboxylation allows a single lysine to coordinate two divalent metal cations.

It catalyses the reaction D-5-phenylhydantoin + H2O = N-carbamoyl-D-phenylglycine + H(+). Functionally, catalyzes the stereospecific hydrolysis of the cyclic amide bond of D-hydantoin derivatives with an aromatic side chains at the 5'-position. Has no activity on dihydropyrimidines. The physiological function is unknown. In Escherichia coli (strain K12), this protein is D-phenylhydantoinase (hyuA).